A 318-amino-acid chain; its full sequence is L-lactate dehydrogenase (318 aa).

NAD(+)-binding positions include V18, D39, K44, Y69, and 83–84; that span reads GA. Residues Q86 and R92 each coordinate substrate. NAD(+) contacts are provided by residues S105, 122–124, and S147; that span reads VSN. Substrate is bound at residue 124–127; that stretch reads NPVD. Position 152–155 (152–155) interacts with substrate; that stretch reads DTSR. Catalysis depends on H179, which acts as the Proton acceptor. Y225 is subject to Phosphotyrosine. T234 serves as a coordination point for substrate.

Belongs to the LDH/MDH superfamily. LDH family. Homotetramer.

The protein resides in the cytoplasm. The catalysed reaction is (S)-lactate + NAD(+) = pyruvate + NADH + H(+). The protein operates within fermentation; pyruvate fermentation to lactate; (S)-lactate from pyruvate: step 1/1. Catalyzes the conversion of lactate to pyruvate. In Clostridium botulinum (strain Langeland / NCTC 10281 / Type F), this protein is L-lactate dehydrogenase.